The chain runs to 263 residues: 3-methyl-2-oxobutanoate hydroxymethyltransferase (263 aa).

Mg(2+)-binding residues include Asp-44 and Asp-83. 3-methyl-2-oxobutanoate is bound by residues 44–45 (DS), Asp-83, and Lys-112. Mg(2+) is bound at residue Glu-114. Catalysis depends on Glu-181, which acts as the Proton acceptor.

Belongs to the PanB family. As to quaternary structure, homodecamer; pentamer of dimers. Requires Mg(2+) as cofactor.

It is found in the cytoplasm. It carries out the reaction 3-methyl-2-oxobutanoate + (6R)-5,10-methylene-5,6,7,8-tetrahydrofolate + H2O = 2-dehydropantoate + (6S)-5,6,7,8-tetrahydrofolate. It functions in the pathway cofactor biosynthesis; (R)-pantothenate biosynthesis; (R)-pantoate from 3-methyl-2-oxobutanoate: step 1/2. Functionally, catalyzes the reversible reaction in which hydroxymethyl group from 5,10-methylenetetrahydrofolate is transferred onto alpha-ketoisovalerate to form ketopantoate. The polypeptide is 3-methyl-2-oxobutanoate hydroxymethyltransferase (Nitrosospira multiformis (strain ATCC 25196 / NCIMB 11849 / C 71)).